Reading from the N-terminus, the 206-residue chain is Flavin prenyltransferase UbiX (206 aa).

FMN-binding positions include 11–13 (GAS), Ser37, 103–106 (SMST), and Arg138. 2 residues coordinate dimethylallyl phosphate: Tyr168 and Arg184.

The protein belongs to the UbiX/PAD1 family.

The enzyme catalyses dimethylallyl phosphate + FMNH2 = prenylated FMNH2 + phosphate. In terms of biological role, flavin prenyltransferase that catalyzes the synthesis of the prenylated FMN cofactor (prenyl-FMN) for 4-hydroxy-3-polyprenylbenzoic acid decarboxylase UbiD. The prenyltransferase is metal-independent and links a dimethylallyl moiety from dimethylallyl monophosphate (DMAP) to the flavin N5 and C6 atoms of FMN. The polypeptide is Flavin prenyltransferase UbiX (Synechocystis sp. (strain ATCC 27184 / PCC 6803 / Kazusa)).